The primary structure comprises 123 residues: Large ribosomal subunit protein bL12 (123 aa).

This sequence belongs to the bacterial ribosomal protein bL12 family. Homodimer. Part of the ribosomal stalk of the 50S ribosomal subunit. Forms a multimeric L10(L12)X complex, where L10 forms an elongated spine to which 2 to 4 L12 dimers bind in a sequential fashion. Binds GTP-bound translation factors.

Functionally, forms part of the ribosomal stalk which helps the ribosome interact with GTP-bound translation factors. Is thus essential for accurate translation. The sequence is that of Large ribosomal subunit protein bL12 from Bartonella quintana (strain Toulouse) (Rochalimaea quintana).